The primary structure comprises 354 residues: Rhodopsin (354 aa).

The Extracellular portion of the chain corresponds to 1-36 (MNGTEGPYFYIPMVNTTGIVRSPYEYPQYYLVNPAA). N-linked (GlcNAc...) asparagine glycans are attached at residues Asn2 and Asn15. The helical transmembrane segment at 37–61 (YAALGAYMFFLILLGFPINFLTLYV) threads the bilayer. The Cytoplasmic segment spans residues 62–73 (TLEHKKLRTPLN). The chain crosses the membrane as a helical span at residues 74–96 (YILLNLAVADLFMVFGGFTTTMY). The Extracellular portion of the chain corresponds to 97–110 (TSMHGYFVLGRLGC). A disulfide bridge connects residues Cys110 and Cys187. The chain crosses the membrane as a helical span at residues 111–133 (NLEGFFATLGGEIGLWSLVVLAI). A 'Ionic lock' involved in activated form stabilization motif is present at residues 134–136 (ERW). Topologically, residues 134–152 (ERWVVVCKPISNFRFGENH) are cytoplasmic. A helical transmembrane segment spans residues 153–173 (AIMGLAFTWIMACACAVPPLV). Over 174 to 202 (GWSRYIPEGMQCSCGVDYYTRAEGFNNES) the chain is Extracellular. An N-linked (GlcNAc...) asparagine glycan is attached at Asn200. The helical transmembrane segment at 203 to 224 (FVVYMFTCHFCIPLTIIGFCYG) threads the bilayer. Residues 225-252 (RLLCAVKEAAAAQQESETTQRAEREVTR) lie on the Cytoplasmic side of the membrane. A helical transmembrane segment spans residues 253 to 274 (MVILMVVGFLVCWLPYASVAWY). The Extracellular portion of the chain corresponds to 275-286 (IFSNQGSQFGPL). A helical transmembrane segment spans residues 287 to 308 (FMTIPAFFAKSSSVYNPMIYIC). N6-(retinylidene)lysine is present on Lys296. The Cytoplasmic segment spans residues 309-354 (MNKQFRHCMITTLCCGKNPFEEEEGASTTASKTEASSVSSSSVSPA). S-palmitoyl cysteine attachment occurs at residues Cys322 and Cys323. The interval 333–354 (GASTTASKTEASSVSSSSVSPA) is disordered. Over residues 334 to 354 (ASTTASKTEASSVSSSSVSPA) the composition is skewed to low complexity.

The protein belongs to the G-protein coupled receptor 1 family. Opsin subfamily. In terms of processing, phosphorylated on some or all of the serine and threonine residues present in the C-terminal region. Post-translationally, contains one covalently linked retinal chromophore.

The protein localises to the membrane. It localises to the cell projection. Its subcellular location is the cilium. It is found in the photoreceptor outer segment. Functionally, photoreceptor required for image-forming vision at low light intensity. While most salt water fish species use retinal as chromophore, most freshwater fish use 3-dehydroretinal, or a mixture of retinal and 3-dehydroretinal. Light-induced isomerization of 11-cis to all-trans retinal triggers a conformational change that activates signaling via G-proteins. Subsequent receptor phosphorylation mediates displacement of the bound G-protein alpha subunit by arrestin and terminates signaling. This chain is Rhodopsin (rho), found in Salaria pavo (Peacock blenny).